The sequence spans 499 residues: Glycerol kinase (499 aa).

ADP is bound at residue threonine 13. Threonine 13, threonine 14, and serine 15 together coordinate ATP. Residue threonine 13 participates in sn-glycerol 3-phosphate binding. Arginine 17 contacts ADP. Sn-glycerol 3-phosphate-binding residues include arginine 83, glutamate 84, tyrosine 135, and aspartate 245. The glycerol site is built by arginine 83, glutamate 84, tyrosine 135, aspartate 245, and glutamine 246. The ADP site is built by threonine 267 and glycine 310. Residues threonine 267, glycine 310, glutamine 314, and glycine 411 each contribute to the ATP site. ADP is bound by residues glycine 411 and asparagine 415.

The protein belongs to the FGGY kinase family.

The catalysed reaction is glycerol + ATP = sn-glycerol 3-phosphate + ADP + H(+). It functions in the pathway polyol metabolism; glycerol degradation via glycerol kinase pathway; sn-glycerol 3-phosphate from glycerol: step 1/1. Its activity is regulated as follows. Inhibited by fructose 1,6-bisphosphate (FBP). In terms of biological role, key enzyme in the regulation of glycerol uptake and metabolism. Catalyzes the phosphorylation of glycerol to yield sn-glycerol 3-phosphate. This Xanthomonas axonopodis pv. citri (strain 306) protein is Glycerol kinase.